A 469-amino-acid polypeptide reads, in one-letter code: Putative dipeptidase SSP1012 (469 aa).

Residue H84 participates in Zn(2+) binding. D86 is an active-site residue. Zn(2+) is bound at residue D115. E149 acts as the Proton acceptor in catalysis. Zn(2+) is bound by residues E150, D173, and H440.

This sequence belongs to the peptidase M20A family. It depends on Zn(2+) as a cofactor.

The polypeptide is Putative dipeptidase SSP1012 (Staphylococcus saprophyticus subsp. saprophyticus (strain ATCC 15305 / DSM 20229 / NCIMB 8711 / NCTC 7292 / S-41)).